A 201-amino-acid chain; its full sequence is Protein CIMAP1C (201 aa).

An STPGR repeat occupies 171–186; that stretch reads PAPTMSSRSGHTSPAR. A disordered region spans residues 172–201; the sequence is APTMSSRSGHTSPARLLSPWASSTRPTYAR. The span at 191–201 shows a compositional bias: polar residues; it reads WASSTRPTYAR.

It belongs to the CIMAP family.

This is Protein CIMAP1C (CIMAP1C) from Bos taurus (Bovine).